Consider the following 132-residue polypeptide: Small ribosomal subunit protein uS8 (132 aa).

This sequence belongs to the universal ribosomal protein uS8 family. In terms of assembly, part of the 30S ribosomal subunit. Contacts proteins S5 and S12.

Functionally, one of the primary rRNA binding proteins, it binds directly to 16S rRNA central domain where it helps coordinate assembly of the platform of the 30S subunit. This is Small ribosomal subunit protein uS8 from Cereibacter sphaeroides (strain ATCC 17025 / ATH 2.4.3) (Rhodobacter sphaeroides).